Reading from the N-terminus, the 494-residue chain is MTDIIRSDAATLAAKIAIKEVSSAEITRACLDQIEATDETYHAFLHVAADEALAAAAAIDKQVAAGEPLPSALAGVPLALKDVFTTSDMPTTCGSKILEGWRSPYDATLTARLRAAGIPILGKTNMDEFAMGSSTENSAYGPTRNPWNLDRVPGGSGGGSAAALAAFQAPLAIGSDTGGSIRQPAALTATVGVKPTYGTVSRYGLVACASSLDQGGPCARTVLDTALLHQVIAGHDPRDSTSVDAEVPDVVGAARAGAVGDLRGVRVGVVRQLHGGEGYQPGVLASFEAAVEQLTALGAEVSEVDCPHFDHALAAYYLILPSEVSSNLARFDAMRYGLRVGDDGTRSAEEVMAMTRAAGFGPEVKRRIMIGTYALSAGYYDAYYNQAQKVRTLIARDLDAAYRSVDVLVSPTTPTTAFRLGEKVDDPLAMYLFDLCTLPLNLAGHCGMSVPSGLSPDDGLPVGLQIMAPALADDRLYRVGAAYEAARGPLLSAI.

Catalysis depends on charge relay system residues K81 and S156. S180 serves as the catalytic Acyl-ester intermediate.

It belongs to the amidase family. GatA subfamily. As to quaternary structure, heterotrimer of A, B and C subunits.

The catalysed reaction is L-glutamyl-tRNA(Gln) + L-glutamine + ATP + H2O = L-glutaminyl-tRNA(Gln) + L-glutamate + ADP + phosphate + H(+). Functionally, allows the formation of correctly charged Gln-tRNA(Gln) through the transamidation of misacylated Glu-tRNA(Gln) in organisms which lack glutaminyl-tRNA synthetase. The reaction takes place in the presence of glutamine and ATP through an activated gamma-phospho-Glu-tRNA(Gln). The polypeptide is Glutamyl-tRNA(Gln) amidotransferase subunit A (Mycobacterium tuberculosis (strain ATCC 25177 / H37Ra)).